The following is a 470-amino-acid chain: Poly(A) polymerase catalytic subunit (470 aa).

Residues Asp192 and Asp194 contribute to the active site.

This sequence belongs to the poxviridae poly(A) polymerase catalytic subunit family. In terms of assembly, heterodimer of a large (catalytic) subunit and a small (regulatory) subunit.

The catalysed reaction is RNA(n) + ATP = RNA(n)-3'-adenine ribonucleotide + diphosphate. In terms of biological role, polymerase that creates the 3'-poly(A) tail of mRNA's. In Deerpox virus (strain Mule deer/United States/W-848-83/1983) (DPV), this protein is Poly(A) polymerase catalytic subunit (PAPL).